A 232-amino-acid chain; its full sequence is Histone H1-II (232 aa).

Low complexity predominate over residues M1–A18. 2 disordered regions span residues M1–S44 and G103–A232. The H15 domain occupies T39 to A114. Basic residues-rich tracts occupy residues S149–K171 and A179–A232.

The protein belongs to the histone H1/H5 family.

The protein resides in the nucleus. Its subcellular location is the chromosome. Its function is as follows. Histones H1 are necessary for the condensation of nucleosome chains into higher-order structures. This is Histone H1-II from Glyptotendipes barbipes (Midge).